Reading from the N-terminus, the 696-residue chain is Potassium voltage-gated channel subfamily KQT member 4 (696 aa).

A disordered region spans residues 1–20 (MAEAPPRRLGLGPPPGDAPR). Residues 1-97 (MAEAPPRRLG…VYNVLERPRG (97 aa)) lie on the Cytoplasmic side of the membrane. R94 is an a 1,2-diacyl-sn-glycero-3-phospho-(1D-myo-inositol-4,5-bisphosphate) binding site. Residues 98–119 (WAFVYHVFIFLLVFSCLVLSVL) form a helical membrane-spanning segment. The Extracellular portion of the chain corresponds to 120 to 130 (STIQEHQELAN). A helical membrane pass occupies residues 131-153 (ECLLILEFVMIVVFGLEYIIRVW). The Cytoplasmic portion of the chain corresponds to 154 to 169 (SAGCCCRYRGWQGRFR). A helical membrane pass occupies residues 170–192 (FARKPFCVIDFIVFVASVAVIAA). K173 is an a 1,2-diacyl-sn-glycero-3-phospho-(1D-myo-inositol-4,5-bisphosphate) binding site. Residues 193-203 (GTQGNIFATSA) are Extracellular-facing. The chain crosses the membrane as a helical; Voltage-sensor span at residues 204 to 224 (LRSMRFLQILRMVRMDRRGGT). Positions 220, 221, 226, and 236 each coordinate a 1,2-diacyl-sn-glycero-3-phospho-(1D-myo-inositol-4,5-bisphosphate). The Cytoplasmic portion of the chain corresponds to 225 to 236 (WKLLGSVVYAHS). The chain crosses the membrane as a helical span at residues 237–259 (KELITAWYIGFLVLIFASFLVYL). Residues 260 to 271 (AEKDANSDFSSY) are Extracellular-facing. Positions 272–293 (ADSLWWGTITLTTIGYGDKTPH) form an intramembrane region, pore-forming. A topological domain (extracellular) is located at residue T294. Residues 295–323 (WLGRVLAAGFALLGISFFALPAGILGSGF) traverse the membrane as a helical segment. Residues 324–696 (ALKVQEQHRQ…ISRSVSTNMD (373 aa)) lie on the Cytoplasmic side of the membrane. A 1,2-diacyl-sn-glycero-3-phospho-(1D-myo-inositol-4,5-bisphosphate)-binding residues include H331 and K334. Residues 343 to 352 (AANLIQAAWR) form an interaction with CALM region. The segment at 445 to 484 (SSQKRTGPSKQHLAPPPIPTSPSSEQVGEASSPSKVQKSW) is disordered. Residues 465 to 484 (SPSSEQVGEASSPSKVQKSW) show a composition bias toward polar residues. Residues 536-550 (RSVRILKFLVAKRKF) are interaction with CALM. The segment at 547–651 (KRKFKETLRP…SRCLRSGTSA (105 aa)) is C-terminal assembly domain (tetramerization). A disordered region spans residues 589–609 (GRGPGDRKTREKGDKGPSDTE). Residues 592–606 (PGDRKTREKGDKGPS) show a composition bias toward basic and acidic residues. Positions 610–645 (AVDEISMMGRVVKVEKQVQSIEHKLDLLLGFYSRCL) form a coiled coil.

Belongs to the potassium channel family. KQT (TC 1.A.1.15) subfamily. Kv7.4/KCNQ4 sub-subfamily. In terms of assembly, homotetramer. Interacts (via C-terminus) with calmodulin; forms a heterooctameric structure (with 4:4 KCNQ1:CALM stoichiometry); the interaction is calcium-independent, constitutive, participates in the proper assembly of a functional channel. The interaction with calcium-free CALM controls channel trafficking whereas interaction with calcium-bound CALM regulates channel gating. May form a functional heteromultimeric channel with KCNQ3. Interacts with HSP90AB1; promotes cell surface expression of KCNQ4. As to expression, in the inner ear expressed in the outer sensory hair cells of the cochlea and in type I hair cells of the vestibular organs. Also expressed in the postsynaptic membrane of the calyx nerve endings innervating type I cells. In the brain expressed in neurons of many, but not all, nuclei of the central auditory pathway. Absent from most other brain regions.

The protein resides in the basal cell membrane. The enzyme catalyses K(+)(in) = K(+)(out). Its activity is regulated as follows. Two molecules of phosphatidylinositol-4,5-bisphosphate (PIP2-I and PIP2-II) are essential to activate KCNQ4 channel by inducing the coupling of the voltage-sensing domain (VSD) and the pore-forming domain (PD). Upon channel activation, PIP2-I and PIP2-II disrupt the VSD-calmodulin/CALM interaction, causing the release of CALM from the VSD which triggers the opening of the gate. Calcium suppresses KCNQ4 channel current through calcium-bound CALM C-terminus. Therefore CALM acts as calcium sensor that controls channel activity. In terms of biological role, pore-forming subunit of the voltage-gated potassium (Kv) channel involved in the regulation of sensory cells excitability in the cochlea. KCNQ4/Kv7.4 channel is composed of 4 pore-forming subunits assembled as tetramers. Promotes the outflow of potassium ions in the repolarization phase of action potential which plays a role in regulating membrane potential of excitable cells. The channel conducts a slowly activating and deactivating current. Current often shows some inward rectification at positive potentials. Channel may be selectively permeable in vitro to other cations besides potassium, in decreasing order of affinity K(+) = Rb(+) &gt; Cs(+) &gt; Na(+). Important for normal physiological function of inner ear such as sensory perception of sound. This is Potassium voltage-gated channel subfamily KQT member 4 from Mus musculus (Mouse).